The chain runs to 420 residues: MHKSAALSLRDAQFADMNMYCDVTDRTPIEAVHSCNNAESLNILNKLLARETDTALSQIFEQPTGKDWKELNTLQTILSLCSTVTMALLLGPDTAPDPVLHHHSTSFGEAIMSSCYRRTGYPRILRPFVWRFSSECRNLRKHFSLVRERLVPEVARRVAAARAADKTKDVRPSSLLDALIAAAFDNGSLSPDDQGRNDAAQVQLLADDLIFYHFELCKPTAFNIIFQLYAIMDHPEYKAPLREEALQALKLTNGDWTVETLKHAPKLESFTKETFRLYDISGFVSFRRVMKPLTLNSIGLSLRPGTILLSPCRNVHLDPEIYEDPTTFNGYRFYDSSREVCSPRVATTSLTFLTFSHGAGSCPARVLATQICRTIFIKFLLQYDVEPVQKEILPYGFTSGPVYMPNPSVMMRIRPRSDGK.

A heme-binding site is contributed by C362.

The protein belongs to the cytochrome P450 family. Heme is required as a cofactor.

It carries out the reaction 2 7-demethylsiderin + NADPH + O2 = orlandin + NADP(+) + 2 H2O. Its pathway is secondary metabolite biosynthesis. Non-reducing polyketide synthase; part of the gene cluster that mediates the biosynthesis of the bicoumarin kotanin. The non-reducing polyketide synthase ktnS first catalyzes the formation of the pentaketidic 4,7-dihydroxy-5-methylcoumarin from acetyl coenzyme A and 4 malonyl coenzyme A molecules. Further O-methylation by ktnB leads to the formation of 7-demethylsiderin. Then, an oxidative phenol coupling catalyzed by the cytochrome P450 monooxygenase ktnC forms the 8,8'-dimer P-orlandin via dimerization the monomeric precursor, 7-demethylsiderin. P-orlandin is subsequently O-methylated in a stepwise fashion to demethylkotanin and kotanin. This chain is Bicoumarin synthase ktnC, found in Aspergillus niger (strain ATCC MYA-4892 / CBS 513.88 / FGSC A1513).